Here is a 202-residue protein sequence, read N- to C-terminus: Holliday junction branch migration complex subunit RuvA (202 aa).

Residues Met-1 to Ser-63 form a domain I region. The domain II stretch occupies residues Thr-64 to Ser-142. The flexible linker stretch occupies residues Ala-143–Asn-153. Residues Asn-153–Leu-202 are domain III.

Belongs to the RuvA family. As to quaternary structure, homotetramer. Forms an RuvA(8)-RuvB(12)-Holliday junction (HJ) complex. HJ DNA is sandwiched between 2 RuvA tetramers; dsDNA enters through RuvA and exits via RuvB. An RuvB hexamer assembles on each DNA strand where it exits the tetramer. Each RuvB hexamer is contacted by two RuvA subunits (via domain III) on 2 adjacent RuvB subunits; this complex drives branch migration. In the full resolvosome a probable DNA-RuvA(4)-RuvB(12)-RuvC(2) complex forms which resolves the HJ.

It is found in the cytoplasm. In terms of biological role, the RuvA-RuvB-RuvC complex processes Holliday junction (HJ) DNA during genetic recombination and DNA repair, while the RuvA-RuvB complex plays an important role in the rescue of blocked DNA replication forks via replication fork reversal (RFR). RuvA specifically binds to HJ cruciform DNA, conferring on it an open structure. The RuvB hexamer acts as an ATP-dependent pump, pulling dsDNA into and through the RuvAB complex. HJ branch migration allows RuvC to scan DNA until it finds its consensus sequence, where it cleaves and resolves the cruciform DNA. This is Holliday junction branch migration complex subunit RuvA from Porphyromonas gingivalis (strain ATCC BAA-308 / W83).